The primary structure comprises 892 residues: Exo-beta-D-glucosaminidase (892 aa).

Residues 1–18 (MLANAIAALLLGSGIASA) form the signal peptide. Residues 19–28 (AGHGSPLTSK) constitute a propeptide that is removed on maturation. N-linked (GlcNAc...) asparagine glycosylation is found at Asn196, Asn336, and Asn440. Asp464 acts as the Proton donor in catalysis. Glu539 acts as the Nucleophile in catalysis. Asn557, Asn578, Asn689, and Asn825 each carry an N-linked (GlcNAc...) asparagine glycan.

This sequence belongs to the glycosyl hydrolase 2 family. In terms of assembly, monomer.

The protein resides in the secreted. Its subcellular location is the extracellular space. It catalyses the reaction Hydrolysis of chitosan or chitosan oligosaccharides to remove successive D-glucosamine residues from the non-reducing termini.. Functionally, hydrolyzes chitosan and chitooligosaccharides with retention of anomeric configuration. Has no activity against beta-D-galactoside, beta-D-glucuronide, beta-D-mannoside, chitin, glycol chitosan, cellulose, N,N'-diacetylchitibiose and pNP-GlcNAc. In Hypocrea jecorina (Trichoderma reesei), this protein is Exo-beta-D-glucosaminidase.